The chain runs to 274 residues: Thiamine kinase (274 aa).

The protein belongs to the thiamine kinase family.

The catalysed reaction is thiamine + ATP = thiamine phosphate + ADP + H(+). It participates in cofactor biosynthesis; thiamine diphosphate biosynthesis; thiamine phosphate from thiamine: step 1/1. Catalyzes the ATP-dependent phosphorylation of thiamine to thiamine phosphate. Is involved in thiamine salvage. This Escherichia coli O6:K15:H31 (strain 536 / UPEC) protein is Thiamine kinase.